The chain runs to 522 residues: DNA damage-binding protein cmr1 (522 aa).

Residues 34-47 (VFTPTLPNRATGSQ) show a composition bias toward polar residues. Disordered regions lie at residues 34–89 (VFTP…KRKA) and 217–239 (QEKP…DPVL). Over residues 49-59 (KTKKKPAPKKV) the composition is skewed to basic residues. One copy of the WD 1 repeat lies at 182 to 223 (LTPERVYTMTFHPSETKPLIFAGDKMGHLGILDASQEKPTSV). A compositionally biased stretch (acidic residues) spans 226–236 (EDEDEEDDDPD). 6 WD repeats span residues 244–284 (PHTR…SVER), 294–331 (VPLS…QGSV), 336–376 (LSEK…RREP), 381–422 (EHQS…ASWK), 445–488 (GRWV…LAQL), and 491–522 (DGIT…CLWM).

The protein belongs to the WD repeat DDB2/WDR76 family.

Its function is as follows. DNA-binding protein that binds to both single- and double-stranded DNA. Binds preferentially to UV-damaged DNA. May be involved in DNA-metabolic processes. In Aspergillus oryzae (strain ATCC 42149 / RIB 40) (Yellow koji mold), this protein is DNA damage-binding protein cmr1.